The primary structure comprises 122 residues: Large ribosomal subunit protein uL18 (122 aa).

Positions 1–24 (MSTLSRKQQTQKRHRRLRRHLSGT) are disordered. Basic residues predominate over residues 9–21 (QTQKRHRRLRRHL).

This sequence belongs to the universal ribosomal protein uL18 family. Part of the 50S ribosomal subunit; part of the 5S rRNA/L5/L18/L25 subcomplex. Contacts the 5S and 23S rRNAs.

Functionally, this is one of the proteins that bind and probably mediate the attachment of the 5S RNA into the large ribosomal subunit, where it forms part of the central protuberance. In Synechococcus sp. (strain WH7803), this protein is Large ribosomal subunit protein uL18.